We begin with the raw amino-acid sequence, 409 residues long: 23S rRNA (uracil(747)-C(5))-methyltransferase (409 aa).

4 residues coordinate [4Fe-4S] cluster: C61, C67, C70, and C137. The S-adenosyl-L-methionine site is built by Q251, Y277, E298, and D339. The active-site Nucleophile is the C365.

Belongs to the class I-like SAM-binding methyltransferase superfamily. RNA M5U methyltransferase family.

It carries out the reaction uridine(747) in 23S rRNA + S-adenosyl-L-methionine = 5-methyluridine(747) in 23S rRNA + S-adenosyl-L-homocysteine + H(+). Its function is as follows. Catalyzes the formation of 5-methyl-uridine at position equivalent to 747 (m5U747) in 23S rRNA. This Pyrococcus furiosus (strain ATCC 43587 / DSM 3638 / JCM 8422 / Vc1) protein is 23S rRNA (uracil(747)-C(5))-methyltransferase.